The sequence spans 350 residues: Phosphoribosylformylglycinamidine cyclo-ligase (350 aa).

The protein belongs to the AIR synthase family.

It localises to the cytoplasm. The catalysed reaction is 2-formamido-N(1)-(5-O-phospho-beta-D-ribosyl)acetamidine + ATP = 5-amino-1-(5-phospho-beta-D-ribosyl)imidazole + ADP + phosphate + H(+). It functions in the pathway purine metabolism; IMP biosynthesis via de novo pathway; 5-amino-1-(5-phospho-D-ribosyl)imidazole from N(2)-formyl-N(1)-(5-phospho-D-ribosyl)glycinamide: step 2/2. This Cupriavidus pinatubonensis (strain JMP 134 / LMG 1197) (Cupriavidus necator (strain JMP 134)) protein is Phosphoribosylformylglycinamidine cyclo-ligase.